We begin with the raw amino-acid sequence, 415 residues long: Phosphoribosylamine--glycine ligase (415 aa).

The region spanning 108 to 311 is the ATP-grasp domain; sequence KKIMEKYNIP…LMQHIIDLDE (204 aa). 134–191 provides a ligand contact to ATP; that stretch reads IENCELPVVVKKDGLAAGKGVIIADTIEAARSAIEIMYGDEEEGTVVFETFLEGEEFS. Residues glutamate 281 and asparagine 283 each contribute to the Mg(2+) site.

Belongs to the GARS family. Requires Mg(2+) as cofactor. Mn(2+) is required as a cofactor.

It catalyses the reaction 5-phospho-beta-D-ribosylamine + glycine + ATP = N(1)-(5-phospho-beta-D-ribosyl)glycinamide + ADP + phosphate + H(+). It functions in the pathway purine metabolism; IMP biosynthesis via de novo pathway; N(1)-(5-phospho-D-ribosyl)glycinamide from 5-phospho-alpha-D-ribose 1-diphosphate: step 2/2. This is Phosphoribosylamine--glycine ligase from Staphylococcus aureus (strain COL).